Reading from the N-terminus, the 178-residue chain is Colicin-A immunity protein (178 aa).

Over 1-13 the chain is Cytoplasmic; the sequence is MMNEHSIDTDNRK. The chain crosses the membrane as a helical span at residues 14–37; it reads ANNALYLFIIIGLIPLLCIFVVYY. The Periplasmic portion of the chain corresponds to 38–68; sequence KTPDALLLRKIATSTENLPSITSSYNPLMTK. The chain crosses the membrane as a helical span at residues 69 to 89; the sequence is VMDIYCKTAPFLALILYILTF. Residues 90 to 105 lie on the Cytoplasmic side of the membrane; the sequence is KIRKLINNTDRNTVLR. The chain crosses the membrane as a helical span at residues 106–123; sequence SCLLSPLVYAAIVYLFCF. Residues 124-142 lie on the Periplasmic side of the membrane; that stretch reads RNFELTTAGRPVRLMATND. Residues 143–165 form a helical membrane-spanning segment; it reads ATLLLFYIGLYSIIFFTTYITLF. Topologically, residues 166 to 178 are cytoplasmic; it reads TPVTAFKLLKKRQ.

Its subcellular location is the cell inner membrane. Its function is as follows. This protein is able to protect a cell, which harbors the plasmid ColA encoding colicin A, against colicin A. This chain is Colicin-A immunity protein (cai), found in Citrobacter freundii.